The chain runs to 218 residues: MVTRMATKVSLEGKRVVLVPYMAEHVPKYHQWMQDSALLEATGSEPLSLEQEYEMQLSWTQDPNKRTFIVLDKDFVKGDLAHGQPHVEAMTGDVNIYMNDVDDPKVAEVEIMIAEPRSRGKGLGKESVLIMMAYGVKNLEIHKFTAKIGESNTASLSLFRKLGFEESSYSGIFKEVTLEYPVTNLRREELLKLLDEVIRHTHSSNNPSDSLLSGEATA.

Positions 36–183 (SALLEATGSE…KEVTLEYPVT (148 aa)) constitute an N-acetyltransferase domain. Residues 112-114 (MIA), 120-125 (GKGLGK), 152-154 (NTA), and Phe-159 contribute to the acetyl-CoA site.

It belongs to the acetyltransferase family. GNAT subfamily. Oligomer. As to expression, expressed throughout the plant.

It localises to the cytoplasm. Its subcellular location is the nucleus. It catalyses the reaction an N-terminal L-alpha-aminoacyl-[protein] + acetyl-CoA = N-terminal N(alpha)-acetyl-L-alpha-aminoacyl-[protein] + CoA + H(+). The enzyme catalyses L-lysyl-[protein] + acetyl-CoA = N(6)-acetyl-L-lysyl-[protein] + CoA + H(+). In terms of biological role, probable protein acetyltransferase with dual specificity triggering both N-alpha-acetylation (NTA) and epsilon-lysine acetylation (KA). The protein is GCN5-related N-acetyltransferase 9 of Arabidopsis thaliana (Mouse-ear cress).